Here is a 329-residue protein sequence, read N- to C-terminus: DNA-directed RNA polymerase subunit alpha (329 aa).

An alpha N-terminal domain (alpha-NTD) region spans residues 1-234 (MQGSVTEFLK…EQLDAFVELR (234 aa)). Residues 248 to 329 (FDPILLRPVD…WPPASLADDL (82 aa)) are alpha C-terminal domain (alpha-CTD).

Belongs to the RNA polymerase alpha chain family. As to quaternary structure, homodimer. The RNAP catalytic core consists of 2 alpha, 1 beta, 1 beta' and 1 omega subunit. When a sigma factor is associated with the core the holoenzyme is formed, which can initiate transcription.

The enzyme catalyses RNA(n) + a ribonucleoside 5'-triphosphate = RNA(n+1) + diphosphate. In terms of biological role, DNA-dependent RNA polymerase catalyzes the transcription of DNA into RNA using the four ribonucleoside triphosphates as substrates. This Shewanella baltica (strain OS155 / ATCC BAA-1091) protein is DNA-directed RNA polymerase subunit alpha.